Consider the following 62-residue polypeptide: Small ribosomal subunit protein eS31 (62 aa).

The Zn(2+) site is built by cysteine 29, cysteine 32, cysteine 48, and cysteine 51. Residues 29–51 (CPRCGSFMAFHKWPVPRWHCGKC) form a C4-type zinc finger.

The protein belongs to the eukaryotic ribosomal protein eS31 family. Part of the 30S ribosomal subunit. Zn(2+) serves as cofactor.

The sequence is that of Small ribosomal subunit protein eS31 from Hyperthermus butylicus (strain DSM 5456 / JCM 9403 / PLM1-5).